We begin with the raw amino-acid sequence, 114 residues long: Large ribosomal subunit protein bL20 (114 aa).

It belongs to the bacterial ribosomal protein bL20 family.

Binds directly to 23S ribosomal RNA and is necessary for the in vitro assembly process of the 50S ribosomal subunit. It is not involved in the protein synthesizing functions of that subunit. The protein is Large ribosomal subunit protein bL20 of Amoebophilus asiaticus (strain 5a2).